Reading from the N-terminus, the 254-residue chain is Nickel import ATP-binding protein NikD (254 aa).

The region spanning 2-241 is the ABC transporter domain; the sequence is PQQIELRNIA…PKHAVTRSLV (240 aa). 36-43 serves as a coordination point for ATP; that stretch reads GGSGSGKS.

This sequence belongs to the ABC transporter superfamily. Nickel importer (TC 3.A.1.5.3) family. In terms of assembly, the complex is composed of two ATP-binding proteins (NikD and NikE), two transmembrane proteins (NikB and NikC) and a solute-binding protein (NikA).

The protein localises to the cell inner membrane. It catalyses the reaction Ni(2+)(out) + ATP + H2O = Ni(2+)(in) + ADP + phosphate + H(+). Functionally, part of the ABC transporter complex NikABCDE involved in nickel import. Responsible for energy coupling to the transport system. In Escherichia coli O157:H7, this protein is Nickel import ATP-binding protein NikD.